A 729-amino-acid polypeptide reads, in one-letter code: DNA topoisomerase 3 (729 aa).

The Toprim domain occupies 3–136 (KKAVLAEKPS…VKRLWISSVT (134 aa)). Mg(2+) contacts are provided by E9 and D105. The region spanning 153 to 590 (YETLYAAAAA…EMKEYAKAVV (438 aa)) is the Topo IA-type catalytic domain. An interaction with DNA region spans residues 187 to 192 (SCGRVQ). Catalysis depends on Y311, which acts as the O-(5'-phospho-DNA)-tyrosine intermediate. The tract at residues 680–708 (FEQRRKQNKHKNVSKREVQSYMKKQNKQD) is disordered.

The protein belongs to the type IA topoisomerase family. Requires Mg(2+) as cofactor.

It catalyses the reaction ATP-independent breakage of single-stranded DNA, followed by passage and rejoining.. Releases the supercoiling and torsional tension of DNA, which is introduced during the DNA replication and transcription, by transiently cleaving and rejoining one strand of the DNA duplex. Introduces a single-strand break via transesterification at a target site in duplex DNA. The scissile phosphodiester is attacked by the catalytic tyrosine of the enzyme, resulting in the formation of a DNA-(5'-phosphotyrosyl)-enzyme intermediate and the expulsion of a 3'-OH DNA strand. The free DNA strand then undergoes passage around the unbroken strand, thus removing DNA supercoils. Finally, in the religation step, the DNA 3'-OH attacks the covalent intermediate to expel the active-site tyrosine and restore the DNA phosphodiester backbone. The sequence is that of DNA topoisomerase 3 from Shouchella clausii (strain KSM-K16) (Alkalihalobacillus clausii).